Reading from the N-terminus, the 207-residue chain is Holliday junction branch migration complex subunit RuvA (207 aa).

The interval 1 to 65 is domain I; it reads MYDYIRGVLT…ETEHVLYGFH (65 aa). The domain II stretch occupies residues 66 to 144; sequence TRGERECFRM…DLLPLDAQIL (79 aa). The segment at 145-155 is flexible linker; sequence ASWEPAKPSCM. Positions 155–207 are domain III; it reads MEEGIQALAALGYPKSSAERMIAEAMSELPDHASVAEILPIALKKNLQGLNKI.

This sequence belongs to the RuvA family. As to quaternary structure, homotetramer. Forms an RuvA(8)-RuvB(12)-Holliday junction (HJ) complex. HJ DNA is sandwiched between 2 RuvA tetramers; dsDNA enters through RuvA and exits via RuvB. An RuvB hexamer assembles on each DNA strand where it exits the tetramer. Each RuvB hexamer is contacted by two RuvA subunits (via domain III) on 2 adjacent RuvB subunits; this complex drives branch migration. In the full resolvosome a probable DNA-RuvA(4)-RuvB(12)-RuvC(2) complex forms which resolves the HJ.

It is found in the cytoplasm. The RuvA-RuvB-RuvC complex processes Holliday junction (HJ) DNA during genetic recombination and DNA repair, while the RuvA-RuvB complex plays an important role in the rescue of blocked DNA replication forks via replication fork reversal (RFR). RuvA specifically binds to HJ cruciform DNA, conferring on it an open structure. The RuvB hexamer acts as an ATP-dependent pump, pulling dsDNA into and through the RuvAB complex. HJ branch migration allows RuvC to scan DNA until it finds its consensus sequence, where it cleaves and resolves the cruciform DNA. In Chlamydia abortus (strain DSM 27085 / S26/3) (Chlamydophila abortus), this protein is Holliday junction branch migration complex subunit RuvA.